Consider the following 332-residue polypeptide: Putative potassium channel regulatory protein sup-10 (332 aa).

Positions 1–18 (MRYAVFIFLIVLIDLIYC) are cleaved as a signal peptide. Topologically, residues 19–301 (WNSKRSFFIP…EISERNKRPA (283 aa)) are extracellular. N61, N107, and N166 each carry an N-linked (GlcNAc...) asparagine glycan. A helical membrane pass occupies residues 302–322 (FVLVGLTGGIAVIILAFSIFW). Topologically, residues 323-332 (GLNGSGFNKD) are cytoplasmic.

In terms of assembly, may form a complex with sup-9 and unc-93 where sup-10 and unc-93 act as regulatory subunits of the two pore potassium channel sup-9. Sup-10 may regulate sup-9 via sup-18. Low levels in body-wall muscles, eight vulval muscles, intestinal muscles and anal depressor muscle.

It is found in the membrane. Functionally, may contribute to coordination of muscle contraction as regulatory subunit of a nonessential potassium channel complex. The polypeptide is Putative potassium channel regulatory protein sup-10 (Caenorhabditis elegans).